The chain runs to 246 residues: Small ribosomal subunit protein uS2 (246 aa).

The protein belongs to the universal ribosomal protein uS2 family.

The chain is Small ribosomal subunit protein uS2 from Helicobacter acinonychis (strain Sheeba).